We begin with the raw amino-acid sequence, 341 residues long: UPF0284 protein Ta0078 (341 aa).

The protein belongs to the UPF0284 family.

This is UPF0284 protein Ta0078 from Thermoplasma acidophilum (strain ATCC 25905 / DSM 1728 / JCM 9062 / NBRC 15155 / AMRC-C165).